A 463-amino-acid chain; its full sequence is MTSETRTLYSQLPAIDRLLHDSAFLSLRDRYGHTQVVDLLRRMLDDARDVIRNTQTLPDWYADWAQEAKLRLENAAQSALRPVINLTGTVLHTNLGRALQAQEAVEAVTQAMRAPVTLEYDLDGAGRGHRDRALATLLCRITGAEDACIVNNNAAAVLLMLAATASGKEVVVSRGELVEIGGAFRIPDVMRQAGCTLHEVGTTNRTHAKDYRQAVNENTGLLMKVHTSNYSIEGFTKTVEEAELAEIGRELDIPVVADLGSGSLVDLSQYGLPKEPMPQQLIAAGVSMVSFSGDKLLGGPQAGIIVGKKAMIAQLQSHPLKRALRADKMTLAALEATLRLYLHPEALAEKLPTLRLLTRSEASIREQAQRLQARLAARYGDEFALEVKPCLSQIGSGSLPVDRLPSAAMTFTPHDGRGSRLEALAARWRTLPVPVIGRIYDGRLWLDMRCLEDESRFMEMMLK.

Lys295 bears the N6-(pyridoxal phosphate)lysine mark.

It belongs to the SelA family. As to quaternary structure, homodecamer; pentamer of dimers. Binds only one seryl-tRNA(Sec) per dimer. Pyridoxal 5'-phosphate serves as cofactor.

It localises to the cytoplasm. It catalyses the reaction L-seryl-tRNA(Sec) + selenophosphate + H(+) = L-selenocysteinyl-tRNA(Sec) + phosphate. Its pathway is aminoacyl-tRNA biosynthesis; selenocysteinyl-tRNA(Sec) biosynthesis; selenocysteinyl-tRNA(Sec) from L-seryl-tRNA(Sec) (bacterial route): step 1/1. Converts seryl-tRNA(Sec) to selenocysteinyl-tRNA(Sec) required for selenoprotein biosynthesis. This is L-seryl-tRNA(Sec) selenium transferase from Salmonella paratyphi B (strain ATCC BAA-1250 / SPB7).